Here is a 548-residue protein sequence, read N- to C-terminus: Folylpolyglutamate synthase (548 aa).

130-133 lines the ATP pocket; it reads GKGS. Mg(2+) contacts are provided by serine 157, glutamate 234, and histidine 262. 2 residues coordinate ATP: arginine 382 and aspartate 396.

Belongs to the folylpolyglutamate synthase family. It depends on a monovalent cation as a cofactor.

It localises to the mitochondrion inner membrane. Its subcellular location is the mitochondrion matrix. It is found in the cytoplasm. It catalyses the reaction (6S)-5,6,7,8-tetrahydrofolyl-(gamma-L-Glu)(n) + L-glutamate + ATP = (6S)-5,6,7,8-tetrahydrofolyl-(gamma-L-Glu)(n+1) + ADP + phosphate + H(+). The protein operates within cofactor biosynthesis; tetrahydrofolylpolyglutamate biosynthesis. In terms of biological role, catalyzes conversion of folates to polyglutamate derivatives allowing concentration of folate compounds in the cell and the intracellular retention of these cofactors, which are important substrates for most of the folate-dependent enzymes that are involved in one-carbon transfer reactions involved in purine, pyrimidine and amino acid synthesis. Required for methionine synthesis and maintenance of intact mitochondrial DNA. Involved in telomere maintenance. The sequence is that of Folylpolyglutamate synthase from Saccharomyces cerevisiae (strain AWRI1631) (Baker's yeast).